The chain runs to 352 residues: Ribosomal lysine N-methyltransferase 5 (352 aa).

Residues Trp107, 161 to 163 (GSG), Asp183, Trp244, and Leu274 contribute to the S-adenosyl-L-methionine site.

The protein belongs to the class I-like SAM-binding methyltransferase superfamily. RKM5 family.

Functionally, S-adenosyl-L-methionine-dependent protein-lysine N-methyltransferase that methylates 60S ribosomal protein L1. The polypeptide is Ribosomal lysine N-methyltransferase 5 (RKM5) (Candida glabrata (strain ATCC 2001 / BCRC 20586 / JCM 3761 / NBRC 0622 / NRRL Y-65 / CBS 138) (Yeast)).